A 117-amino-acid chain; its full sequence is DNA-directed RNA polymerase subunit omega (117 aa).

The protein belongs to the RNA polymerase subunit omega family. The RNAP catalytic core consists of 2 alpha, 1 beta, 1 beta' and 1 omega subunit. When a sigma factor is associated with the core the holoenzyme is formed, which can initiate transcription.

The catalysed reaction is RNA(n) + a ribonucleoside 5'-triphosphate = RNA(n+1) + diphosphate. In terms of biological role, promotes RNA polymerase assembly. Latches the N- and C-terminal regions of the beta' subunit thereby facilitating its interaction with the beta and alpha subunits. This Ruegeria sp. (strain TM1040) (Silicibacter sp.) protein is DNA-directed RNA polymerase subunit omega.